The primary structure comprises 382 residues: Alpha-methylacyl-CoA racemase (382 aa).

Residues Arg-36 and 55-58 each bind substrate; that span reads LDLK. An N6-acetyllysine modification is found at Lys-58. At Lys-87 the chain carries N6-acetyllysine; alternate. Lys-87 carries the post-translational modification N6-succinyllysine; alternate. Substrate is bound at residue 121–126; the sequence is GHDINY. His-122 serves as the catalytic Proton acceptor. The Proton donor role is filled by Asp-152. Position 268 is an N6-succinyllysine (Lys-268). Positions 380-382 match the Microbody targeting signal motif; that stretch reads ASL.

Belongs to the CoA-transferase III family. In terms of assembly, monomer.

The protein resides in the peroxisome. It is found in the mitochondrion. It carries out the reaction a (2S)-2-methylacyl-CoA = a (2R)-2-methylacyl-CoA. The enzyme catalyses (25R)-3alpha,7alpha,12alpha-trihydroxy-5beta-cholestan-26-oyl-CoA = (25S)-3alpha,7alpha,12alpha-trihydroxy-5beta-cholestan-26-oyl-CoA. The catalysed reaction is (2R,6)-dimethylheptanoyl-CoA = (2S,6)-dimethylheptanoyl-CoA. Its pathway is lipid metabolism; bile acid biosynthesis. It functions in the pathway lipid metabolism; fatty acid metabolism. Catalyzes the interconversion of (R)- and (S)-stereoisomers of alpha-methyl-branched-chain fatty acyl-CoA esters. Acts only on coenzyme A thioesters, not on free fatty acids, and accepts as substrates a wide range of alpha-methylacyl-CoAs, including pristanoyl-CoA, trihydroxycoprostanoyl-CoA (an intermediate in bile acid synthesis), and arylpropionic acids like the anti-inflammatory drug ibuprofen (2-(4-isobutylphenyl)propionic acid) but neither 3-methyl-branched nor linear-chain acyl-CoAs. The chain is Alpha-methylacyl-CoA racemase (AMACR) from Homo sapiens (Human).